A 402-amino-acid chain; its full sequence is Zinc finger protein 322 (402 aa).

Residues 43–65 (YQCLECKQNFCENLALIMCERTH) form a C2H2-type 1; atypical zinc finger. 8 C2H2-type zinc fingers span residues 71 to 93 (YKCDMCEKTFVQSSDLTSHQRIH), 99 to 121 (YKCSKCEKSFWHHLALSGHQRTH), 127 to 149 (YTCDICGKNFGQSSDLLVHQRSH), 155 to 177 (YLCSECDKCFSRSTNLIRHRRTH), 183 to 205 (FKCLECEKAFSGKSDLISHQRTH), 211 to 233 (YKCNKCEKSYRHRSAFIVHKRVH), 239 to 261 (YKCGACEKCFGQKSDLIVHQRVH), and 267 to 289 (YKCLECMRSFTRSANLIRHQATH). The segment at 293-315 (FKCLEYEKSFNCSSDLIVHQRIH) adopts a C2H2-type 10; degenerate zinc-finger fold. The segment at 351-373 (YKYTVCDKSFHQSSALLQHQTVH) adopts a C2H2-type 11; degenerate zinc-finger fold. Residue S391 is modified to Phosphoserine.

It belongs to the krueppel C2H2-type zinc-finger protein family. In terms of assembly, interacts with POU5F1. As to expression, ubiquitous. Highly expressed in heart and skeletal muscle.

The protein resides in the cytoplasm. The protein localises to the nucleus. Functionally, transcriptional activator. Important for maintenance of pluripotency in embryonic stem cells. Binds directly to the POU5F1 distal enhancer and the NANOG proximal promoter, and enhances expression of both genes. Can also bind to numerous other gene promoters and regulates expression of many other pluripotency factors, either directly or indirectly. Promotes inhibition of MAPK signaling during embryonic stem cell differentiation. The polypeptide is Zinc finger protein 322 (ZNF322) (Homo sapiens (Human)).